We begin with the raw amino-acid sequence, 108 residues long: Cuticle protein AM1199 (108 aa).

A Pyrrolidone carboxylic acid modification is found at Gln1. The Chitin-binding type R&amp;R domain occupies 26–91 (DGNFGYDFET…AESPLIPTPH (66 aa)). O-linked (HexNAc) threonine glycosylation is present at Thr89.

Arthrodial membrane.

This Cancer pagurus (Rock crab) protein is Cuticle protein AM1199.